Reading from the N-terminus, the 204-residue chain is N-(5'-phosphoribosyl)anthranilate isomerase (204 aa).

Belongs to the TrpF family.

The enzyme catalyses N-(5-phospho-beta-D-ribosyl)anthranilate = 1-(2-carboxyphenylamino)-1-deoxy-D-ribulose 5-phosphate. It functions in the pathway amino-acid biosynthesis; L-tryptophan biosynthesis; L-tryptophan from chorismate: step 3/5. The protein is N-(5'-phosphoribosyl)anthranilate isomerase of Bacillus cereus (strain ZK / E33L).